Here is a 161-residue protein sequence, read N- to C-terminus: Ribosomal RNA large subunit methyltransferase H (161 aa).

Residues Leu78, Gly110, and 129–134 (LGRMTF) each bind S-adenosyl-L-methionine.

It belongs to the RNA methyltransferase RlmH family. As to quaternary structure, homodimer.

It is found in the cytoplasm. It catalyses the reaction pseudouridine(1915) in 23S rRNA + S-adenosyl-L-methionine = N(3)-methylpseudouridine(1915) in 23S rRNA + S-adenosyl-L-homocysteine + H(+). In terms of biological role, specifically methylates the pseudouridine at position 1915 (m3Psi1915) in 23S rRNA. The protein is Ribosomal RNA large subunit methyltransferase H of Symbiobacterium thermophilum (strain DSM 24528 / JCM 14929 / IAM 14863 / T).